We begin with the raw amino-acid sequence, 62 residues long: MKKIEKLTEKEMANIIGGKYYGNGVTCGKHSCSVDWGKATTCIINNGAMAWATGGHQGNHKC.

The propeptide occupies 1–18; it reads MKKIEKLTEKEMANIIGG. Intrachain disulfides connect cysteine 27–cysteine 32 and cysteine 42–cysteine 62. The tract at residues 40–52 is hydrophobic; sequence TTCIINNGAMAWA.

Belongs to the bacteriocin class IIA/YGNGV family.

It localises to the secreted. In terms of biological role, bactericidal activity (effective inhibitor of L.monocytogenes). This is Bacteriocin pediocin PA-1 (pedA) from Pediococcus acidilactici.